Here is a 180-residue protein sequence, read N- to C-terminus: CASP-like protein 2D1 (180 aa).

Over 1–7 (MAASGLK) the chain is Cytoplasmic. Residues 8 to 28 (VPEMALRVCVVPLALASLWEM) form a helical membrane-spanning segment. Residues 29–48 (ATNAQADDTYGEVKFSDLSG) lie on the Extracellular side of the membrane. A helical membrane pass occupies residues 49 to 69 (FSYLVGVNAVTAAYALVSILL). The Cytoplasmic portion of the chain corresponds to 70 to 79 (SSLKPLARYD). The chain crosses the membrane as a helical span at residues 80–100 (WVILVMDQASAYLLVTSASAA). The Extracellular segment spans residues 101-129 (AELLQLARRGDREVSWGEVCSYFGRFCGK). The chain crosses the membrane as a helical span at residues 130–150 (ATVSLALHAAALACFVALALV). Residues 151–180 (SAFRVLSTTGSSCHPPKHAQAQEHEQGRYN) lie on the Cytoplasmic side of the membrane. The disordered stretch occupies residues 161–180 (SSCHPPKHAQAQEHEQGRYN). A compositionally biased stretch (basic and acidic residues) spans 170 to 180 (QAQEHEQGRYN).

It belongs to the Casparian strip membrane proteins (CASP) family. As to quaternary structure, homodimer and heterodimers.

It localises to the cell membrane. The protein is CASP-like protein 2D1 of Sorghum bicolor (Sorghum).